We begin with the raw amino-acid sequence, 203 residues long: IMP cyclohydrolase (203 aa).

This sequence belongs to the archaeal IMP cyclohydrolase family.

The enzyme catalyses IMP + H2O = 5-formamido-1-(5-phospho-D-ribosyl)imidazole-4-carboxamide. It participates in purine metabolism; IMP biosynthesis via de novo pathway; IMP from 5-formamido-1-(5-phospho-D-ribosyl)imidazole-4-carboxamide: step 1/1. Its function is as follows. Catalyzes the cyclization of 5-formylamidoimidazole-4-carboxamide ribonucleotide to IMP. The protein is IMP cyclohydrolase of Methanococcus aeolicus (strain ATCC BAA-1280 / DSM 17508 / OCM 812 / Nankai-3).